A 479-amino-acid polypeptide reads, in one-letter code: Transcript termination protein A18 (479 aa).

The Helicase ATP-binding domain occupies 99-255; it reads KNKHKRPTYI…NDIINVSNSL (157 aa). 112-119 contributes to the ATP binding site; the sequence is LACGFGKT. The short motif at 205–208 is the DESH box element; the sequence is DESH. A Helicase C-terminal domain is found at 308-469; sequence ILDTIIYDFN…EKKGKKKELA (162 aa).

Belongs to the helicase family. Poxviruses subfamily. As to quaternary structure, interacts with G2. Might be part of a transcription complex composed at least of G2, A18, and H5.

Its subcellular location is the virion. DNA helicase which seems to act as a postreplicative transcription termination factor. Involved in ATP-dependent release of nascent RNA. Forms a stable complex with single-stranded DNA, and to a lesser extent RNA. The chain is Transcript termination protein A18 from Homo sapiens (Human).